The following is a 319-amino-acid chain: MEPILAPNPNRFVIFPIQYYDIWNMYKKAEASFWTVEEVDISKDINDWNKLTPDEKYFIKHVLAFFAASDGIVNENLAERFCTEVQITEARCFYGFQMAIENIHSEMYSLLIDTYVKDSNEKNYLFNAIETMPCVKKKADWAQKWIHDSAGYGERLIAFAAVEGIFFSGSFASIFWLKKRGLMPGLTFSNELISRDEGLHCDFACLMFKHLLYPPSEETVRSIITDAVSIEQEFLTAALPVKLIGMNCEMMKTYIEFVADRLISELGFKKIYNVTNPFDFMENISLEGKTNFFEKRVGEYQKMGVMSQEDNHFSLDVDF.

The Fe cation site is built by Asp-70, Glu-101, and His-104. Tyr-108 is an active-site residue. Glu-163, Glu-197, and His-200 together coordinate Fe cation. The interval 313–319 (FSLDVDF) is interaction with R1.

It belongs to the ribonucleoside diphosphate reductase small chain family. In terms of assembly, interacts with RNR1/OPG080 subunit. Can interact with host RNR1 supunit. Fe cation serves as cofactor.

The enzyme catalyses a 2'-deoxyribonucleoside 5'-diphosphate + [thioredoxin]-disulfide + H2O = a ribonucleoside 5'-diphosphate + [thioredoxin]-dithiol. Its function is as follows. Ribonucleoside-diphosphate reductase holoenzyme provides the precursors necessary for viral DNA synthesis. Allows virus growth in non-dividing cells. Catalyzes the biosynthesis of deoxyribonucleotides from the corresponding ribonucleotides. In Vaccinia virus (strain Copenhagen) (VACV), this protein is Ribonucleoside-diphosphate reductase small chain (OPG048).